The sequence spans 162 residues: MTSKSCLLLVAMVTLTTSVMGTAEVMSHVTAHFGKALEECREESGLSAEVLEEFQHFWREDFEVVHRELGCAIICMSNKFSLLQDDSRMHHVNMHDYVKSFPNGHVLSEKLVELIHNCEKKYDTMTDDCDRVVKVAACFKVDAKAAGIAPEVTMIEAVMEKY.

The first 18 residues, 1–18 (MTSKSCLLLVAMVTLTTS), serve as a signal peptide directing secretion. 3 disulfide bridges follow: Cys40/Cys75, Cys71/Cys129, and Cys118/Cys138.

This sequence belongs to the PBP/GOBP family. As to expression, antenna.

Its function is as follows. Present in the aqueous fluid surrounding olfactory sensory dendrites and are thought to aid in the capture and transport of hydrophobic odorants into and through this fluid. This chain is General odorant-binding protein 2, found in Heliothis virescens (Tobacco budworm moth).